We begin with the raw amino-acid sequence, 626 residues long: Phosphomethylpyrimidine synthase (626 aa).

Residues 1–27 are disordered; that stretch reads MSKQEKAISLSESAQVDQQSVQPLPNS. Residues 10-25 are compositionally biased toward polar residues; sequence LSESAQVDQQSVQPLP. Substrate-binding positions include Asn232, Met261, Tyr290, His326, 346 to 348, 387 to 390, and Glu426; these read SRG and DGLR. His430 is a Zn(2+) binding site. Position 453 (Tyr453) interacts with substrate. Residue His494 coordinates Zn(2+). Residues Cys574, Cys577, and Cys582 each coordinate [4Fe-4S] cluster.

It belongs to the ThiC family. Homodimer. [4Fe-4S] cluster serves as cofactor.

The catalysed reaction is 5-amino-1-(5-phospho-beta-D-ribosyl)imidazole + S-adenosyl-L-methionine = 4-amino-2-methyl-5-(phosphooxymethyl)pyrimidine + CO + 5'-deoxyadenosine + formate + L-methionine + 3 H(+). The protein operates within cofactor biosynthesis; thiamine diphosphate biosynthesis. Catalyzes the synthesis of the hydroxymethylpyrimidine phosphate (HMP-P) moiety of thiamine from aminoimidazole ribotide (AIR) in a radical S-adenosyl-L-methionine (SAM)-dependent reaction. This Pseudomonas entomophila (strain L48) protein is Phosphomethylpyrimidine synthase.